Consider the following 341-residue polypeptide: DER1-like family member protein 1 (341 aa).

Residues 1–41 lie on the Cytoplasmic side of the membrane; the sequence is MAGPRNVRTLHGNGGRNNDVMGPKEFWLNIPPITRTLFTLA. A helical transmembrane segment spans residues 42-62; it reads IVMTIVGRLNLINPWYFIYVW. Residues 63 to 122 lie on the Lumenal side of the membrane; the sequence is NLTFKKVQIWRLLTSCVMLSSRAMPALMELYSIYDRSSQLERGHFGPGLSNRRGPMVTVD. Residues 123-143 traverse the membrane as a helical segment; the sequence is YAYYLCFCILAITTATTIIYG. The Cytoplasmic segment spans residues 144–170; the sequence is SYYPVVLTSGFISCITYTWSIDNANVQ. A helical membrane pass occupies residues 171 to 191; it reads IMFYGLIPVWGKYFPLIQLFI. Residue serine 192 is a topological domain, lumenal. Residues 193–213 form a helical membrane-spanning segment; that stretch reads FVFNEGDFVISLIGFTTGYLY. Residues 214–341 lie on the Cytoplasmic side of the membrane; sequence TCLDTHTLGP…GQTNSPSDSQ (128 aa). 2 stretches are compositionally biased toward polar residues: residues 276–286 and 296–341; these read SSQRETRTFSG and ATLS…SDSQ. The tract at residues 276-341 is disordered; sequence SSQRETRTFS…GQTNSPSDSQ (66 aa).

This sequence belongs to the derlin family.

Its subcellular location is the endoplasmic reticulum membrane. Its function is as follows. May be involved in the degradation process of some misfolded endoplasmic reticulum (ER) luminal proteins. Its precise role is however unclear and its inability to complement der1 mutations, suggests either that it is not involved in degradation process of misfolded proteins, or that it participates in the destruction of specific misfolded ER luminal proteins. The sequence is that of DER1-like family member protein 1 (DFM1) from Saccharomyces cerevisiae (strain ATCC 204508 / S288c) (Baker's yeast).